The primary structure comprises 574 residues: Proline--tRNA ligase (574 aa).

The protein belongs to the class-II aminoacyl-tRNA synthetase family. ProS type 1 subfamily. Homodimer.

Its subcellular location is the cytoplasm. The enzyme catalyses tRNA(Pro) + L-proline + ATP = L-prolyl-tRNA(Pro) + AMP + diphosphate. Its function is as follows. Catalyzes the attachment of proline to tRNA(Pro) in a two-step reaction: proline is first activated by ATP to form Pro-AMP and then transferred to the acceptor end of tRNA(Pro). As ProRS can inadvertently accommodate and process non-cognate amino acids such as alanine and cysteine, to avoid such errors it has two additional distinct editing activities against alanine. One activity is designated as 'pretransfer' editing and involves the tRNA(Pro)-independent hydrolysis of activated Ala-AMP. The other activity is designated 'posttransfer' editing and involves deacylation of mischarged Ala-tRNA(Pro). The misacylated Cys-tRNA(Pro) is not edited by ProRS. In Hahella chejuensis (strain KCTC 2396), this protein is Proline--tRNA ligase.